A 449-amino-acid chain; its full sequence is Sensor protein QseC (449 aa).

The Cytoplasmic segment spans residues 1–12 (MKLTQRLSLRVR). A helical transmembrane segment spans residues 13–33 (LTLIFLILVSITWAISSFVAW). Residues 34–161 (RKTTDNVDEL…REDMALAIVA (128 aa)) are Periplasmic-facing. A helical membrane pass occupies residues 162-182 (AQLTPWLIALPFMLLILLLLL). In terms of domain architecture, HAMP spans 183–235 (HRELRPLKKLAQALRFRSPESETPLDAKGVPSEVRPLVEALNQLFSRIHSMMV). Residues 183-449 (HRELRPLKKL…EGGFEAVVRW (267 aa)) are Cytoplasmic-facing. The 207-residue stretch at 243 to 449 (DAAHELRSPL…EGGFEAVVRW (207 aa)) folds into the Histidine kinase domain. Histidine 246 carries the phosphohistidine; by autocatalysis modification.

The protein resides in the cell inner membrane. It carries out the reaction ATP + protein L-histidine = ADP + protein N-phospho-L-histidine.. Its function is as follows. Member of a two-component regulatory system QseB/QseC. Activates the flagella regulon by activating transcription of FlhDC. May activate QseB by phosphorylation. In Salmonella typhi, this protein is Sensor protein QseC (qseC).